Consider the following 876-residue polypeptide: Alanine--tRNA ligase (876 aa).

Zn(2+)-binding residues include His-560, His-564, Cys-662, and His-666.

The protein belongs to the class-II aminoacyl-tRNA synthetase family. It depends on Zn(2+) as a cofactor.

It localises to the cytoplasm. It carries out the reaction tRNA(Ala) + L-alanine + ATP = L-alanyl-tRNA(Ala) + AMP + diphosphate. Functionally, catalyzes the attachment of alanine to tRNA(Ala) in a two-step reaction: alanine is first activated by ATP to form Ala-AMP and then transferred to the acceptor end of tRNA(Ala). Also edits incorrectly charged Ser-tRNA(Ala) and Gly-tRNA(Ala) via its editing domain. The protein is Alanine--tRNA ligase of Synechococcus elongatus (strain ATCC 33912 / PCC 7942 / FACHB-805) (Anacystis nidulans R2).